A 261-amino-acid polypeptide reads, in one-letter code: Glucose 1-dehydrogenase 1 (261 aa).

11–35 (VITGSSTGLGKAMAIRFATEKAKVV) contacts NADP(+). Ser145 contributes to the substrate binding site. Residue Tyr158 is the Proton acceptor of the active site.

It belongs to the short-chain dehydrogenases/reductases (SDR) family. Homotetramer.

The enzyme catalyses D-glucose + NAD(+) = D-glucono-1,5-lactone + NADH + H(+). It carries out the reaction D-glucose + NADP(+) = D-glucono-1,5-lactone + NADPH + H(+). Functionally, may play some role in spore germination. This is Glucose 1-dehydrogenase 1 (gdhI) from Priestia megaterium (Bacillus megaterium).